The following is a 475-amino-acid chain: Flavin-dependent monooxygenase (475 aa).

Belongs to the aromatic-ring hydroxylase family. The cofactor is FAD.

The protein resides in the cytoplasm. It catalyses the reaction a tetracycline + NADPH + O2 + H(+) = an 11a-hydroxytetracycline + NADP(+) + H2O. It carries out the reaction tetracycline + NADPH + O2 + H(+) = 11a-hydroxytetracycline + NADP(+) + H2O. With respect to regulation, inhibited by anhydrotetracycline. Functionally, an FAD-requiring monooxygenase active on some tetracycline antibiotic derivatives, which leads to their inactivation. Hydroxylates carbon 11a of tetracycline and some analogs. Confers resistance to tetracycline and doxycycline via an oxidoreductase activity; probably monooxygenates the antibiotics. Does not act on tigecycline. The protein is Flavin-dependent monooxygenase of Mycobacteroides abscessus (strain ATCC 19977 / DSM 44196 / CCUG 20993 / CIP 104536 / JCM 13569 / NCTC 13031 / TMC 1543 / L948) (Mycobacterium abscessus).